We begin with the raw amino-acid sequence, 605 residues long: Ankyrin repeat domain-containing protein 13D (605 aa).

ANK repeat units lie at residues 39–68 and 72–101; these read RGRT…NVGK and QGWA…YQRA. The interval 306 to 333 is disordered; that stretch reads AQQHSSHTGAPVQQAASPTNPTAISPEE. Residues 319–328 are compositionally biased toward polar residues; it reads QAASPTNPTA. UIM domains follow at residues 482 to 501 and 528 to 547; these read EDDD…AGTE and EEQL…STEP. Residues 541 to 605 are disordered; it reads LQLSTEPRGP…RILQLSLTEH (65 aa). The span at 550 to 563 shows a compositional bias: pro residues; the sequence is PGSPPRTPPAPGPP. Position 552 is a phosphoserine (S552). Residue T556 is modified to Phosphothreonine. The span at 564-575 shows a compositional bias: low complexity; sequence SFEEQLRLALEL. 2 UIM domains span residues 564-583 and 589-605; these read SFEE…QEER and QEEE…LTEH. Basic and acidic residues predominate over residues 576–589; that stretch reads SSREQEERERRGQQ.

As to quaternary structure, interacts with EGFR (ubiquitinated); the interaction is direct and may regulate EGFR internalization.

It localises to the cell membrane. It is found in the late endosome. Ubiquitin-binding protein that specifically recognizes and binds 'Lys-63'-linked ubiquitin. Does not bind 'Lys-48'-linked ubiquitin. Positively regulates the internalization of ligand-activated EGFR by binding to the Ub moiety of ubiquitinated EGFR at the cell membrane. This chain is Ankyrin repeat domain-containing protein 13D (ANKRD13D), found in Homo sapiens (Human).